The chain runs to 44 residues: Thaumatin-like protein 5 (44 aa).

The protein belongs to the thaumatin family.

This chain is Thaumatin-like protein 5, found in Glebionis coronaria (Crown daisy).